Consider the following 358-residue polypeptide: Ribosomal RNA large subunit methyltransferase M (358 aa).

S-adenosyl-L-methionine contacts are provided by residues S191, 224–227 (APGG), D243, D263, and D279. K308 acts as the Proton acceptor in catalysis.

Belongs to the class I-like SAM-binding methyltransferase superfamily. RNA methyltransferase RlmE family. RlmM subfamily. In terms of assembly, monomer.

It is found in the cytoplasm. The catalysed reaction is cytidine(2498) in 23S rRNA + S-adenosyl-L-methionine = 2'-O-methylcytidine(2498) in 23S rRNA + S-adenosyl-L-homocysteine + H(+). In terms of biological role, catalyzes the 2'-O-methylation at nucleotide C2498 in 23S rRNA. This is Ribosomal RNA large subunit methyltransferase M from Marinobacter nauticus (strain ATCC 700491 / DSM 11845 / VT8) (Marinobacter aquaeolei).